The chain runs to 1114 residues: MPGVVMDNANIGGLRHGPGNTYPQDGLSHSRGEVAQFNGANAQDGPVHVNGVEKNASQSRSVEAIPSNHASRVTKGPPELPHITQGFFPFAKLVNRSVQQCWNDLSDLITEMAEMQVNSHGIHPSTAPTTGKSPGNQSPGNIRKKLRILEFSHAKRAEFIKLLVLSQWSRQAADVSKLIDIQNFIRTRHQAYTNALQWVGDMKRDLVQAQVANPDLKTALEVLSRGKVASMSDLGYKPPRRLTVRGTLRKLQKINRLIGARLVVQDEIPPPFKSYRVHDGRVTFAVPGEFELDLSIGEENENSQFFFVDIRFLFSPSPPILKGRLLNELEMTINDVLQNSGLTGCFDLLHNLVLTNKINILFKQATELARSSWSDGLRVELLHRTLVVQYWTLKPGTKSWLEIGIKSGHRKSDSESPGLPSLKFRWVRDGGEVPCEDIAFDAKNLSMETVLRSVIALHVSHTLSSAYCKIRQSSLFSTGFLSLRAHLTRTEPGDCQLDVQLTETRHLQVSIEPMSGVSILSAKPTVSDRFDMERNPERSSVEDIVSRVARIRCNAAIEEIESKVKMLGFEPLNPRAWKLDIRRIFPPNFLRFTLFSHQLWGRSWIVAATSSMDGDSWWVVQLRPTLPAKGPPIPHANGYGQPILRSAQVVTDSFFPARYDIDDAYLANLGHSLSGILAIQSNARYLSDLQSIKFHPPPHKLKIEPDLRVPDILVRYDVSTLPSVFRVAMPAKAKKKSLIRDTIRLAFHGVDPREKCAIMVAYGNLVDSTATLCPLISSWDRSLVFQKGGTGFAMRLLAPAGHPVIVSLLENLQRLECVLSILETLQRKKVEIRTFSLSSISFIYGSERDLAASLNIHLSRNESLMKLSPTDLASRREFLFGLRLGIQFGLQNPHRRIQESLASSLNRSPTEAGLETVVELLTLTLPLMRALDQLMANPSHSGPLRLHVTVRNAKTYQLHYPGDEARFQLVAASHQNRLVWVLKDANSQGNSKNDDSITARLRQTLYTSKGDGWKGLETGVVAEVDQVGNLLRELEKCFVASRADRADPKHKPTDYAANHTGLNNPEISALAIKKGTTDGAKLSLSDSLTTLPNDKGNLSQADTAAQKEDIIMID.

Disordered stretches follow at residues 1 to 27, 40 to 79, and 120 to 141; these read MPGV…QDGL, ANAQ…GPPE, and HGIH…SPGN. Residues 126-140 are compositionally biased toward polar residues; it reads TAPTTGKSPGNQSPG.

This sequence belongs to the Mediator complex subunit 14 family. Component of the Mediator complex.

It is found in the nucleus. Component of the Mediator complex, a coactivator involved in the regulated transcription of nearly all RNA polymerase II-dependent genes. Mediator functions as a bridge to convey information from gene-specific regulatory proteins to the basal RNA polymerase II transcription machinery. Mediator is recruited to promoters by direct interactions with regulatory proteins and serves as a scaffold for the assembly of a functional preinitiation complex with RNA polymerase II and the general transcription factors. The protein is Mediator of RNA polymerase II transcription subunit 14 (rgr1) of Aspergillus niger (strain ATCC MYA-4892 / CBS 513.88 / FGSC A1513).